The following is a 184-amino-acid chain: MNLKPESYILRIGHRPERDQRVTTHVGLSSRALGASGMYLAADDAKVADSITDVATRFGGTFFCENNVKWKSCINQFKKSGGKVVHLTMYGLRLQDVIADIRKEEKVMIVVGAEKVPGDLYELADYNVAVANQPHSEISALALCLDHLYEGKELDLAFPDAELEVLPTKIGKTTIKHEHDQEKP.

S-adenosyl-L-methionine is bound by residues Leu-87, 112–116, and 130–137; these read GAEKV and VANQPHSE.

This sequence belongs to the aTrm56 family. As to quaternary structure, homodimer.

It is found in the cytoplasm. It catalyses the reaction cytidine(56) in tRNA + S-adenosyl-L-methionine = 2'-O-methylcytidine(56) in tRNA + S-adenosyl-L-homocysteine + H(+). Its function is as follows. Specifically catalyzes the AdoMet-dependent 2'-O-ribose methylation of cytidine at position 56 in tRNAs. The polypeptide is tRNA (cytidine(56)-2'-O)-methyltransferase (Methanocorpusculum labreanum (strain ATCC 43576 / DSM 4855 / Z)).